The sequence spans 539 residues: Propionyl-CoA carboxylase beta chain, mitochondrial (539 aa).

The N-terminal 28 residues, 1 to 28 (MAAAVRVTAARARLRVVVRSLHAGVRSL), are a transit peptide targeting the mitochondrion. The 259-residue stretch at 32–290 (PVSVNERIEN…SNQDPAPIRE (259 aa)) folds into the CoA carboxyltransferase N-terminal domain. The tract at residues 32–533 (PVSVNERIEN…SKKVQRPWRK (502 aa)) is carboxyltransferase. Position 71 is a phosphoserine (Ser-71). Lys-99 carries the N6-acetyllysine; alternate modification. Lys-99 is subject to N6-succinyllysine; alternate. A CoA carboxyltransferase C-terminal domain is found at 294–533 (PSDRLVPELD…SKKVQRPWRK (240 aa)). The interval 325–358 (DERDFFEIMPNYAKNIIVGFARMNGRTVGIVGNQ) is acyl-CoA binding. Lys-474 and Lys-489 each carry N6-acetyllysine; alternate. N6-succinyllysine; alternate occurs at positions 474 and 489.

This sequence belongs to the AccD/PCCB family. In terms of assembly, the holoenzyme is a dodecamer composed of 6 PCCA/alpha subunits and 6 PCCB/beta subunits.

It localises to the mitochondrion matrix. The catalysed reaction is propanoyl-CoA + hydrogencarbonate + ATP = (S)-methylmalonyl-CoA + ADP + phosphate + H(+). It carries out the reaction butanoyl-CoA + hydrogencarbonate + ATP = (2S)-ethylmalonyl-CoA + ADP + phosphate + H(+). It participates in metabolic intermediate metabolism; propanoyl-CoA degradation; succinyl-CoA from propanoyl-CoA: step 1/3. In terms of biological role, this is one of the 2 subunits of the biotin-dependent propionyl-CoA carboxylase (PCC), a mitochondrial enzyme involved in the catabolism of odd chain fatty acids, branched-chain amino acids isoleucine, threonine, methionine, and valine and other metabolites. Propionyl-CoA carboxylase catalyzes the carboxylation of propionyl-CoA/propanoyl-CoA to D-methylmalonyl-CoA/(S)-methylmalonyl-CoA. Within the holoenzyme, the alpha subunit catalyzes the ATP-dependent carboxylation of the biotin carried by the biotin carboxyl carrier (BCC) domain, while the beta subunit then transfers the carboxyl group from carboxylated biotin to propionyl-CoA. Propionyl-CoA carboxylase also significantly acts on butyryl-CoA/butanoyl-CoA, which is converted to ethylmalonyl-CoA/(2S)-ethylmalonyl-CoA at a much lower rate. Other alternative minor substrates include (2E)-butenoyl-CoA/crotonoyl-CoA. The chain is Propionyl-CoA carboxylase beta chain, mitochondrial from Sus scrofa (Pig).